Here is an 842-residue protein sequence, read N- to C-terminus: Taste receptor type 1 member 1 (842 aa).

Residues 1 to 19 (MLFWAAHLLLSLQLAVAYC) form the signal peptide. The Extracellular segment spans residues 20–568 (WAFSCQRTES…EFLGWHEPIS (549 aa)). Residues asparagine 88, asparagine 89, asparagine 96, asparagine 136, asparagine 292, asparagine 480, and asparagine 530 are each glycosylated (N-linked (GlcNAc...) asparagine). Residues 569 to 589 (LVLLAANTLLLLLLIGTAGLF) form a helical membrane-spanning segment. Topologically, residues 590 to 604 (AWRLHTPVVRSAGGR) are cytoplasmic. Residues 605 to 625 (LCFLMLGSLVAGSCSLYSFFG) form a helical membrane-spanning segment. Over 626 to 640 (KPTVPACLLRQPLFS) the chain is Extracellular. Residues 641 to 661 (LGFAIFLSCLTIRSFQLVIIF) form a helical membrane-spanning segment. Residues 662–681 (KFSTKVPTFYHTWAQNHGAG) lie on the Cytoplasmic side of the membrane. A helical transmembrane segment spans residues 682-702 (IFVIVSSTVHLFLCLTWLAMW). The Extracellular segment spans residues 703–725 (TPRPTREYQRFPHLVILECTEVN). Residues 726–746 (SVGFLVAFAHNILLSISTFVC) form a helical membrane-spanning segment. The Cytoplasmic segment spans residues 747–762 (SYLGKELPENYNEAKC). Residues 763-783 (VTFSLLLHFVSWIAFFTMSSI) traverse the membrane as a helical segment. Topologically, residues 784–789 (YQGSYL) are extracellular. The helical transmembrane segment at 790–810 (PAVNVLAGLATLSGGFSGYFL) threads the bilayer. Topologically, residues 811–842 (PKCYVILCRPELNNTEHFQASIQDYTRRCGTT) are cytoplasmic.

This sequence belongs to the G-protein coupled receptor 3 family. TAS1R subfamily. As to quaternary structure, forms heterodimers with TAS1R3. As to expression, expressed strongly only in fungiform papillae.

It is found in the cell membrane. Its function is as follows. Putative taste receptor. TAS1R1/TAS1R3 responds to the umami taste stimulus (the taste of monosodium glutamate) and also to most of the 20 standard L-amino acids, but not to their D-enantiomers or other compounds. Sequence differences within and between species can significantly influence the selectivity and specificity of taste responses. This Mus musculus (Mouse) protein is Taste receptor type 1 member 1 (Tas1r1).